The following is a 601-amino-acid chain: Glutathione-regulated potassium-efflux system protein KefB (601 aa).

13 helical membrane passes run 4–24, 29–49, 55–75, 87–107, 111–131, 152–172, 177–197, 207–227, 230–250, 262–282, 284–304, 324–344, and 356–376; these read ADLL…VPLA, IGAV…GLGF, EILH…GLEL, IFGV…GLLM, FLWQ…TAMA, VLLF…LLAG, HFDW…LIGG, FIAA…LVLS, LFMD…GVLL, AIDP…GMSL, LGVL…LVVI, MQFA…FSTA, and ALLL…MKGI. The RCK N-terminal domain maps to 400-519; sequence KPQVIVVGFG…AGVTQFSRET (120 aa).

This sequence belongs to the monovalent cation:proton antiporter 2 (CPA2) transporter (TC 2.A.37) family. KefB subfamily. In terms of assembly, interacts with the regulatory subunit KefG.

It localises to the cell inner membrane. Functionally, pore-forming subunit of a potassium efflux system that confers protection against electrophiles. Catalyzes K(+)/H(+) antiport. The chain is Glutathione-regulated potassium-efflux system protein KefB from Salmonella newport (strain SL254).